The sequence spans 380 residues: Protein GOLM2 (380 aa).

Methionine 1 is modified (N-acetylmethionine). The Cytoplasmic portion of the chain corresponds to 1–14; it reads MVGFGANRRAGRLP. The chain crosses the membrane as a helical; Signal-anchor for type II membrane protein span at residues 15–35; the sequence is SLVLAVLLVVIAVLAFNYWSI. Residues 35–195 adopt a coiled-coil conformation; the sequence is ISSRHVLLQE…QFLQEQKQEA (161 aa). Over 36 to 380 the chain is Lumenal; it reads SSRHVLLQEE…YGKQRFNDAL (345 aa). 2 stretches are compositionally biased toward basic and acidic residues: residues 192 to 212 and 227 to 247; these read KQEAHKFESKGGNELDTDNHA and KNEEPSSHHIPHGKEQIKRGG. A disordered region spans residues 192–254; sequence KQEAHKFESK…RGGDAGMPGI (63 aa). Phosphoserine occurs at positions 233 and 275. Residues 280 to 380 are disordered; it reads ESHQVISHLP…YGKQRFNDAL (101 aa). The span at 305-321 shows a compositional bias: polar residues; that stretch reads NHNGNSRTSKQNPSNPL. A compositionally biased stretch (basic and acidic residues) spans 344–380; sequence ATKDRAGDFHKLKQNDEERELQMDPADYGKQRFNDAL.

Belongs to the GOLM family.

It is found in the membrane. This Bos taurus (Bovine) protein is Protein GOLM2 (GOLM2).